The chain runs to 217 residues: GRB2-related adapter protein (217 aa).

Residues 1-58 (MESVALYSFQATESDELAFNKGDTLKILNMEDDQNWYKAELRGAEGFVPKNYIRLKPH) form the SH3 1 domain. The SH2 domain maps to 60 to 152 (WYSGRISRQL…KRQVFLQDEE (93 aa)). Residues 158-217 (PRACFAQAQFDFSAQDPSQLSFRRGDIIEVLERLDPSWWRGRLSGRIGFFPRSYVQPVHM) enclose the SH3 2 domain.

It belongs to the GRB2/sem-5/DRK family. As to quaternary structure, associates through its SH2 domain with ligand-activated receptors for stem cell factor (KIT) and erythropoietin (EPOR). Also forms a stable complex with the Bcr-Abl oncoprotein. GRAP is associated with the Ras guanine nucleotide exchange factor SOS1, primarily through its N-terminal SH3 domain. Interacts with phosphorylated LAT upon TCR activation. Interacts with SHB.

The protein resides in the membrane. The protein localises to the synapse. Functionally, couples signals from receptor and cytoplasmic tyrosine kinases to the Ras signaling pathway. Plays a role in the inner ear and in hearing. In Bos taurus (Bovine), this protein is GRB2-related adapter protein (GRAP).